Here is a 498-residue protein sequence, read N- to C-terminus: Guanosine-5'-triphosphate,3'-diphosphate pyrophosphatase (498 aa).

The protein belongs to the GppA/Ppx family. GppA subfamily.

The enzyme catalyses guanosine 3'-diphosphate 5'-triphosphate + H2O = guanosine 3',5'-bis(diphosphate) + phosphate + H(+). It participates in purine metabolism; ppGpp biosynthesis; ppGpp from GTP: step 2/2. In terms of biological role, catalyzes the conversion of pppGpp to ppGpp. Guanosine pentaphosphate (pppGpp) is a cytoplasmic signaling molecule which together with ppGpp controls the 'stringent response', an adaptive process that allows bacteria to respond to amino acid starvation, resulting in the coordinated regulation of numerous cellular activities. In Yersinia pseudotuberculosis serotype O:1b (strain IP 31758), this protein is Guanosine-5'-triphosphate,3'-diphosphate pyrophosphatase.